Here is a 153-residue protein sequence, read N- to C-terminus: UPF0260 protein YcgN (153 aa).

It belongs to the UPF0260 family.

The protein is UPF0260 protein YcgN of Salmonella paratyphi B (strain ATCC BAA-1250 / SPB7).